The following is a 243-amino-acid chain: TIGR03089 family protein (243 aa).

This sequence belongs to the TIGR03089 family.

This chain is TIGR03089 family protein, found in Mycobacterium tuberculosis (strain ATCC 25618 / H37Rv).